A 188-amino-acid polypeptide reads, in one-letter code: Elongation factor P (188 aa).

Belongs to the elongation factor P family.

It is found in the cytoplasm. Its pathway is protein biosynthesis; polypeptide chain elongation. Functionally, involved in peptide bond synthesis. Stimulates efficient translation and peptide-bond synthesis on native or reconstituted 70S ribosomes in vitro. Probably functions indirectly by altering the affinity of the ribosome for aminoacyl-tRNA, thus increasing their reactivity as acceptors for peptidyl transferase. The polypeptide is Elongation factor P (Azotobacter vinelandii (strain DJ / ATCC BAA-1303)).